The following is a 73-amino-acid chain: Toxin Td5 (73 aa).

Residues 1 to 7 form the signal peptide; the sequence is IGMVVEC. Residues 8–70 enclose the LCN-type CS-alpha/beta domain; the sequence is KDGYLVGNDG…IWNSATNRCR (63 aa). Disulfide bonds link cysteine 18-cysteine 69, cysteine 22-cysteine 44, cysteine 30-cysteine 50, and cysteine 34-cysteine 52. Arginine amide is present on arginine 70.

The protein belongs to the long (4 C-C) scorpion toxin superfamily. Sodium channel inhibitor family. Beta subfamily. Expressed by the venom gland.

The protein localises to the secreted. Its function is as follows. Beta toxins bind voltage-independently at site-4 of sodium channels (Nav) and shift the voltage of activation toward more negative potentials thereby affecting sodium channel activation and promoting spontaneous and repetitive firing. The sequence is that of Toxin Td5 from Tityus discrepans (Venezuelan scorpion).